The primary structure comprises 496 residues: Probable cytosol aminopeptidase (496 aa).

Mn(2+) is bound by residues Lys-258 and Asp-263. Lys-270 is an active-site residue. Mn(2+)-binding residues include Asp-281, Asp-340, and Glu-342. Arg-344 is a catalytic residue.

The protein belongs to the peptidase M17 family. Mn(2+) serves as cofactor.

The protein localises to the cytoplasm. The enzyme catalyses Release of an N-terminal amino acid, Xaa-|-Yaa-, in which Xaa is preferably Leu, but may be other amino acids including Pro although not Arg or Lys, and Yaa may be Pro. Amino acid amides and methyl esters are also readily hydrolyzed, but rates on arylamides are exceedingly low.. The catalysed reaction is Release of an N-terminal amino acid, preferentially leucine, but not glutamic or aspartic acids.. Its function is as follows. Presumably involved in the processing and regular turnover of intracellular proteins. Catalyzes the removal of unsubstituted N-terminal amino acids from various peptides. In Helicobacter pylori (strain P12), this protein is Probable cytosol aminopeptidase.